The following is a 232-amino-acid chain: 7-cyano-7-deazaguanine synthase (232 aa).

8–18 (FSGGQDSTTCL) contacts ATP. 4 residues coordinate Zn(2+): C189, C198, C201, and C204.

Belongs to the QueC family. Zn(2+) is required as a cofactor.

It carries out the reaction 7-carboxy-7-deazaguanine + NH4(+) + ATP = 7-cyano-7-deazaguanine + ADP + phosphate + H2O + H(+). Its pathway is purine metabolism; 7-cyano-7-deazaguanine biosynthesis. Its function is as follows. Catalyzes the ATP-dependent conversion of 7-carboxy-7-deazaguanine (CDG) to 7-cyano-7-deazaguanine (preQ(0)). The protein is 7-cyano-7-deazaguanine synthase of Proteus mirabilis (strain HI4320).